A 232-amino-acid chain; its full sequence is Phosphoglycolate phosphatase (232 aa).

The Nucleophile role is filled by Asp-13. Mg(2+) is bound by residues Asp-13, Asp-15, and Asp-175.

This sequence belongs to the HAD-like hydrolase superfamily. CbbY/CbbZ/Gph/YieH family. Monomer. It depends on Mg(2+) as a cofactor. Chloride is required as a cofactor.

The catalysed reaction is 2-phosphoglycolate + H2O = glycolate + phosphate. It functions in the pathway organic acid metabolism; glycolate biosynthesis; glycolate from 2-phosphoglycolate: step 1/1. Its function is as follows. Specifically catalyzes the dephosphorylation of 2-phosphoglycolate. Is involved in the dissimilation of the intracellular 2-phosphoglycolate formed during the DNA repair of 3'-phosphoglycolate ends, a major class of DNA lesions induced by oxidative stress. This chain is Phosphoglycolate phosphatase, found in Yersinia pseudotuberculosis serotype I (strain IP32953).